We begin with the raw amino-acid sequence, 816 residues long: Coiled-coil and C2 domain-containing protein 1-like (816 aa).

Positions 1-11 are enriched in basic and acidic residues; sequence MFSRKKPEPAK. 3 disordered regions span residues 1–135, 157–176, and 186–269; these read MFSR…TFLP, ANAK…RGLK, and AAGK…RQTD. Over residues 25-47 the composition is skewed to acidic residues; the sequence is IPDDFDPSAGYGEDDGGDSDLEA. Positions 73–85 are enriched in basic and acidic residues; it reads DLDKMIADSLRDV. The span at 86–100 shows a compositional bias: acidic residues; sequence SDDDDDDNLESDPDL. Positions 122-131 are enriched in low complexity; it reads PPAASEEPVQ. Residues 145 to 200 are DM14 1; sequence IKQRLEMYKQAEANAKTAGDSGKARRFGRGLKTLKDLHRQAAAGKSINVDDIPPEV. Residues 220–243 show a composition bias toward pro residues; it reads PSTPASPPPVPSRAAPDPPTPGTP. DM14 regions lie at residues 265 to 317 and 365 to 419; these read SRQT…MPPP and LQQR…LPVP. A coiled-coil region spans residues 355-382; the sequence is LAAATNMLEALQQRLEKYQSVEAAAKAE. The segment at 418–492 is disordered; that stretch reads VPPGFGPLPT…TRTSGNQQKN (75 aa). Residues 424–433 are compositionally biased toward low complexity; it reads PLPTADAAPV. The segment covering 434–449 has biased composition (pro residues); that stretch reads APTPSLPTSPTSPPPT. Over residues 450-471 the composition is skewed to low complexity; the sequence is ASTSAGGTPSSSSATTPTAPRK. The segment covering 483-492 has biased composition (polar residues); that stretch reads TRTSGNQQKN. The segment at 502–556 is DM14 4; it reads LLERQKEFKLAAIEAKKAGEIDQAKEYLKIFKGFDSLLNAASSGLPVDLSTLPVP. A C2 domain is found at 637 to 776; sequence RKNEPLPKFH…ETKCEIHDTY (140 aa).

The protein belongs to the CC2D1 family. As to quaternary structure, interacts (via DM14 domains 1 and 3) with shrb; the interaction is direct and blocks access to the surface involved in shrb polymerization. This interaction may be required for the ESCRT-III complex role in multivesicular body formation.

The protein localises to the cytoplasm. Its subcellular location is the cytosol. The protein resides in the apicolateral cell membrane. It localises to the cell cortex. It is found in the endosome. Phosphatidyl inositol monophosphate binding protein involved in endosomal protein sorting through regulation of the endosomal sorting required for transport (ESCRT) pathway. Required for full activity of the ESCRT-III complex core component shrb/shrub, probably by preventing its inappropriate polymerisation. Required, but not essential, for the efficient generation of intraluminal vesicles (ILVs) in multivesicular bodies (MVBs). Involved in a late stage of the endosomal pathway targeting transmembrane proteins of the plasma membrane for lysosomal degradation. Plays a critical role in regulation of multiple signal transduction pathways, including the Notch and BMP/decapentaplegic (dpp) signaling pathways, through targeting of membrane bound receptors to multivesicular bodies, isolating them from the cytoplasm and targeting them for lysosomal degradation. Involved in targeting N/Notch for endosomal degradation, negatively regulating the Notch signaling pathway. Regulates Notch signaling in imaginal disk cells and follicle cells during oogenesis and multiple developmental processes, including development of wings, veins, legs, eyes and bristles. Restricts the activity of Notch to the dorsoventral (D/V) boundary of the wing imaginal disk. In external sensory organ development regulates Notch signaling during asymmetric cell division and differentiation of sensory organ precursor cells. May be involved in regulation of apoptosis and cell growth independent of Notch signaling. Involved in targeting tkv for endosomal degradation, negatively regulating the BMP/decapentaplegic (dpp) signaling pathway. Regulates the BMP/dpp signaling pathway in follicle cells during oogenesis, but not in imaginal disk cells during wing development. May be involved in differentiation or morphogenesis of peripodial epithelial cells in the developing imaginal disk. Involved in abscission of germline cells during oogenesis. This is Coiled-coil and C2 domain-containing protein 1-like from Drosophila melanogaster (Fruit fly).